We begin with the raw amino-acid sequence, 281 residues long: ATP synthase gamma chain (281 aa).

The protein belongs to the ATPase gamma chain family. As to quaternary structure, F-type ATPases have 2 components, CF(1) - the catalytic core - and CF(0) - the membrane proton channel. CF(1) has five subunits: alpha(3), beta(3), gamma(1), delta(1), epsilon(1). CF(0) has three main subunits: a, b and c.

It is found in the cell membrane. Functionally, produces ATP from ADP in the presence of a proton gradient across the membrane. The gamma chain is believed to be important in regulating ATPase activity and the flow of protons through the CF(0) complex. The protein is ATP synthase gamma chain of Desulfitobacterium hafniense (strain DSM 10664 / DCB-2).